A 544-amino-acid polypeptide reads, in one-letter code: Chaperonin GroEL (544 aa).

Residues 30–33 (TLGP), Lys-51, 87–91 (DGTTT), Gly-415, 479–481 (NAA), and Asp-495 contribute to the ATP site.

This sequence belongs to the chaperonin (HSP60) family. In terms of assembly, forms a cylinder of 14 subunits composed of two heptameric rings stacked back-to-back. Interacts with the co-chaperonin GroES.

The protein resides in the cytoplasm. It carries out the reaction ATP + H2O + a folded polypeptide = ADP + phosphate + an unfolded polypeptide.. In terms of biological role, together with its co-chaperonin GroES, plays an essential role in assisting protein folding. The GroEL-GroES system forms a nano-cage that allows encapsulation of the non-native substrate proteins and provides a physical environment optimized to promote and accelerate protein folding. The chain is Chaperonin GroEL from Francisella tularensis subsp. holarctica (strain FTNF002-00 / FTA).